A 304-amino-acid polypeptide reads, in one-letter code: Murein tetrapeptide carboxypeptidase (304 aa).

Serine 106 (nucleophile) is an active-site residue. Catalysis depends on charge relay system residues glutamate 200 and histidine 270.

The protein belongs to the peptidase S66 family.

Its subcellular location is the cytoplasm. The enzyme catalyses N-acetyl-D-glucosaminyl-N-acetylmuramoyl-L-alanyl-meso-2,6-diaminoheptanedioyl-D-alanine + H2O = N-acetyl-D-glucosaminyl-N-acetylmuramoyl-L-alanyl-meso-2,6-diaminoheptanedioate + D-alanine. It participates in cell wall biogenesis; peptidoglycan recycling. Releases the terminal D-alanine residue from the cytoplasmic tetrapeptide recycling product L-Ala-gamma-D-Glu-meso-Dap-D-Ala. Can also cleave D-Ala from murein derivatives containing the tetrapeptide, i.e. MurNAc-tetrapeptide, UDP-MurNAc-tetrapeptide, GlcNAc-MurNAc-tetrapeptide, and GlcNAc-anhMurNAc-tetrapeptide. Does not act on murein sacculi or cross-linked muropeptides. The tripeptides produced by the LcdA reaction can then be reused as peptidoglycan building blocks; LcdA is thereby involved in murein recycling. The protein is Murein tetrapeptide carboxypeptidase (ldcA) of Escherichia coli O6:H1 (strain CFT073 / ATCC 700928 / UPEC).